Here is a 130-residue protein sequence, read N- to C-terminus: DNA-directed RNA polymerase subunit omega (130 aa).

A disordered region spans residues glutamate 110–glutamate 130.

It belongs to the RNA polymerase subunit omega family. As to quaternary structure, the RNAP catalytic core consists of 2 alpha, 1 beta, 1 beta' and 1 omega subunit. When a sigma factor is associated with the core the holoenzyme is formed, which can initiate transcription.

The enzyme catalyses RNA(n) + a ribonucleoside 5'-triphosphate = RNA(n+1) + diphosphate. In terms of biological role, promotes RNA polymerase assembly. Latches the N- and C-terminal regions of the beta' subunit thereby facilitating its interaction with the beta and alpha subunits. The sequence is that of DNA-directed RNA polymerase subunit omega from Rhodopseudomonas palustris (strain HaA2).